Reading from the N-terminus, the 447-residue chain is Coagulation factor VII (447 aa).

Residues 1–23 (MLSQAWALALLCFLLSLWGSLPA) form the signal peptide. The propeptide occupies 24-40 (VFLPQEQALSILHRPRR). In terms of domain architecture, Gla spans 41-85 (ANGFLEELLPGSLERECREELCSFEEAHEIFRNEERTRQFWVSYN). A 4-carboxyglutamate mark is found at E46, E47, E54, E56, E59, E60, E65, E66, E69, E74, and E75. A disulfide bond links C57 and C62. The region spanning 86–122 (DGDQCASSPCQNGGSCEDQLRSYICFCPDGFEGRNCE) is the EGF-like 1; calcium-binding domain. Disulfide bonds link C90-C101, C95-C110, C112-C121, C131-C142, C138-C152, C154-C167, C175-C302, C199-C204, C218-C234, and C350-C369. S92 carries O-linked (Glc...) serine glycosylation. An O-linked (Glc...) serine; alternate glycan is attached at S92. An O-linked (Xyl...) serine; alternate glycan is attached at S92. O-linked (Fuc) serine glycosylation is present at S100. Residues 127-168 (SQLICANDNGGCEQYCGADPGAGRFCWCHEGYALQADGVSCA) enclose the EGF-like 2 domain. An N-linked (GlcNAc...) asparagine glycan is attached at N185. One can recognise a Peptidase S1 domain in the interval 193 to 432 (IVGGHVCPKG…YTAWLRQLMG (240 aa)). Residue H233 is the Charge relay system of the active site. N-linked (GlcNAc...) asparagine glycosylation is present at N243. D282 functions as the Charge relay system in the catalytic mechanism. D378 is a substrate binding site. Cysteines 380 and 408 form a disulfide. Residue S384 is the Charge relay system of the active site.

It belongs to the peptidase S1 family. As to quaternary structure, heterodimer of a light chain and a heavy chain linked by a disulfide bond. Post-translationally, the vitamin K-dependent, enzymatic carboxylation of some glutamate residues allows the modified protein to bind calcium. In terms of processing, O-glycosylated. O-fucosylated by POFUT1 on a conserved serine or threonine residue found in the consensus sequence C2-X(4,5)-[S/T]-C3 of EGF domains, where C2 and C3 are the second and third conserved cysteines. Can be either O-glucosylated or O-xylosylated at Ser-92 by POGLUT1. As to expression, plasma.

It localises to the secreted. It catalyses the reaction Selective cleavage of Arg-|-Ile bond in factor X to form factor Xa.. In terms of biological role, initiates the extrinsic pathway of blood coagulation. Serine protease that circulates in the blood in a zymogen form. Factor VII is converted to factor VIIa by factor Xa, factor XIIa, factor IXa, or thrombin by minor proteolysis. In the presence of tissue factor and calcium ions, factor VIIa then converts factor X to factor Xa by limited proteolysis. Factor VIIa also converts factor IX to factor IXa in the presence of tissue factor and calcium. The protein is Coagulation factor VII (F7) of Bos taurus (Bovine).